The primary structure comprises 694 residues: PTS system fructose-specific EIIABC component (694 aa).

Residues 4–149 (PLLSAELFFN…NGLINLIDSF (146 aa)) form the PTS EIIA type-2 domain. Residue histidine 68 is the Tele-phosphohistidine intermediate; for EIIA activity of the active site. Phosphohistidine; by HPr is present on histidine 68. The region spanning 179–275 (FVAVTACPTG…PQTVYDQVVK (97 aa)) is the PTS EIIB type-2 domain. Cysteine 185 serves as the catalytic Phosphocysteine intermediate; for EIIB activity. Phosphocysteine; by EIIA is present on cysteine 185. One can recognise a PTS EIIC type-2 domain in the interval 310 to 687 (IYRAILSGVS…NLLVVRKKTK (378 aa)). 10 helical membrane passes run 318-338 (VSYM…AFLI), 364-384 (GGLS…FALV), 390-410 (LPGF…IDIV), 422-442 (VSSG…LIIV), 461-481 (ILFI…VINI), 502-522 (LAPL…GGPV), 542-562 (VAMA…AIAA), 576-596 (AAYA…IPFV), 602-622 (IMLA…GAFA), and 655-675 (GVGL…GIII).

The protein resides in the cell membrane. It carries out the reaction D-fructose(out) + N(pros)-phospho-L-histidyl-[protein] = D-fructose 1-phosphate(in) + L-histidyl-[protein]. In terms of biological role, the phosphoenolpyruvate-dependent sugar phosphotransferase system (sugar PTS), a major carbohydrate active transport system, catalyzes the phosphorylation of incoming sugar substrates concomitantly with their translocation across the cell membrane. This system is involved in fructose transport. The polypeptide is PTS system fructose-specific EIIABC component (Mycoplasma pneumoniae (strain ATCC 29342 / M129 / Subtype 1) (Mycoplasmoides pneumoniae)).